A 232-amino-acid polypeptide reads, in one-letter code: Phosphatidylserine decarboxylase proenzyme (232 aa).

Ser190 functions as the Schiff-base intermediate with substrate; via pyruvic acid in the catalytic mechanism. Ser190 carries the pyruvic acid (Ser); by autocatalysis modification.

Belongs to the phosphatidylserine decarboxylase family. PSD-A subfamily. Heterodimer of a large membrane-associated beta subunit and a small pyruvoyl-containing alpha subunit. Pyruvate serves as cofactor. Post-translationally, is synthesized initially as an inactive proenzyme. Formation of the active enzyme involves a self-maturation process in which the active site pyruvoyl group is generated from an internal serine residue via an autocatalytic post-translational modification. Two non-identical subunits are generated from the proenzyme in this reaction, and the pyruvate is formed at the N-terminus of the alpha chain, which is derived from the carboxyl end of the proenzyme. The post-translation cleavage follows an unusual pathway, termed non-hydrolytic serinolysis, in which the side chain hydroxyl group of the serine supplies its oxygen atom to form the C-terminus of the beta chain, while the remainder of the serine residue undergoes an oxidative deamination to produce ammonia and the pyruvoyl prosthetic group on the alpha chain.

It localises to the cell membrane. The enzyme catalyses a 1,2-diacyl-sn-glycero-3-phospho-L-serine + H(+) = a 1,2-diacyl-sn-glycero-3-phosphoethanolamine + CO2. It functions in the pathway phospholipid metabolism; phosphatidylethanolamine biosynthesis; phosphatidylethanolamine from CDP-diacylglycerol: step 2/2. Its function is as follows. Catalyzes the formation of phosphatidylethanolamine (PtdEtn) from phosphatidylserine (PtdSer). The protein is Phosphatidylserine decarboxylase proenzyme of Rhodopseudomonas palustris (strain TIE-1).